Reading from the N-terminus, the 267-residue chain is MVIKLEFEFLLLLPLLIIVGFIVGILGSLFGIGGGFLVAPILTFIFDYFGIPDGVKFAVGTSLFVVFINSIISIFRHAKIKNINWKASITIGIISLVFSYFSGFLVVNFIDSAILKKLFGIFLIANAIYMAKSHHIDKISDREDKLEPFILCGVITGFLSGLFGIGGGIVIIPILAMAKYPVKRAVAISVGVIPLTSIGGLISYLTANTEGYIYNIGYVSIPIALIMAIPIIYSSKLGIKINQKISPKHLRIMLSSILGVMGLFMLL.

7 helical membrane-spanning segments follow: residues 10–30 (LLLLPLLIIVGFIVGILGSLF), 31–51 (GIGGGFLVAPILTFIFDYFGI), 55–75 (VKFAVGTSLFVVFINSIISIF), 87–107 (ASITIGIISLVFSYFSGFLVV), 158–178 (FLSGLFGIGGGIVIIPILAMA), 185–205 (AVAISVGVIPLTSIGGLISYL), and 213–233 (IYNIGYVSIPIALIMAIPIIY).

It belongs to the 4-toluene sulfonate uptake permease (TSUP) (TC 2.A.102) family.

The protein resides in the cell membrane. In Methanocaldococcus jannaschii (strain ATCC 43067 / DSM 2661 / JAL-1 / JCM 10045 / NBRC 100440) (Methanococcus jannaschii), this protein is Probable membrane transporter protein MJ0441.